Consider the following 245-residue polypeptide: DNA polymerase sliding clamp (245 aa).

The protein belongs to the PCNA family. In terms of assembly, homotrimer. The subunits circularize to form a toroid; DNA passes through its center. Replication factor C (RFC) is required to load the toroid on the DNA.

In terms of biological role, sliding clamp subunit that acts as a moving platform for DNA processing. Responsible for tethering the catalytic subunit of DNA polymerase and other proteins to DNA during high-speed replication. In Methanococcoides burtonii (strain DSM 6242 / NBRC 107633 / OCM 468 / ACE-M), this protein is DNA polymerase sliding clamp.